Consider the following 351-residue polypeptide: Protein RecA (351 aa).

67–74 is a binding site for ATP; sequence GPESSGKT.

This sequence belongs to the RecA family.

The protein resides in the cytoplasm. Functionally, can catalyze the hydrolysis of ATP in the presence of single-stranded DNA, the ATP-dependent uptake of single-stranded DNA by duplex DNA, and the ATP-dependent hybridization of homologous single-stranded DNAs. It interacts with LexA causing its activation and leading to its autocatalytic cleavage. The sequence is that of Protein RecA from Mannheimia succiniciproducens (strain KCTC 0769BP / MBEL55E).